The sequence spans 518 residues: MKKLKINYLFIGILALLLAVALWPSIPWFGKADNRIAAIQARGELRVSTIHTPLTYNEINGKPFGLDYELAKQFADYLGVKLKVTVRQNISQLFDDLDNGNADLLAAGLVYNSERVKNYQPGPTYYSVSQQLVYKVSQYRPRTLGNLTAEQLTVAPGHVVVNDLQTLKDTKFPELSWKVDDKKGSAELMEDVIEGKLDYTIADSVAISLFQRVHPELAVALDITDEQPVTWFSPLDGDNTLSAALLDFFNEMNEDGTLARIEEKYLGHGDDFDYVDTRTFLRAVDAVLPQLKPLFEKYAEEIDWRLLAAIAYQESHWDAQATSPTGVRGMMMLTKNTAQSLGITDRTDAEQSISGGVRYLQDMMSKVPESVPENERIWFALAAYNMGYAHMLDARALTAKTKGNPDSWADVKQCLPLLSQKPYYSKLTYGYARGHEAYAYVENIRKYQISLVGYLQEKEKQATEAAMQLAQDYPAVSPTELGKEKFPFLSFLSQSSSNYLTHSPSLLFSRKGSEEKQN.

The N-terminal stretch at 1–21 is a signal peptide; sequence MKKLKINYLFIGILALLLAVA. Residues 22 to 269 form a non-LT domain region; that stretch reads LWPSIPWFGK…RIEEKYLGHG (248 aa). An LT domain region spans residues 270–518; sequence DDFDYVDTRT…SRKGSEEKQN (249 aa). Residue Glu314 is part of the active site.

The protein in the N-terminal section; belongs to the bacterial solute-binding protein 3 family. In the C-terminal section; belongs to the transglycosylase Slt family.

The protein resides in the cell outer membrane. It carries out the reaction Exolytic cleavage of the (1-&gt;4)-beta-glycosidic linkage between N-acetylmuramic acid (MurNAc) and N-acetylglucosamine (GlcNAc) residues in peptidoglycan, from either the reducing or the non-reducing ends of the peptidoglycan chains, with concomitant formation of a 1,6-anhydrobond in the MurNAc residue.. Functionally, murein-degrading enzyme that degrades murein glycan strands and insoluble, high-molecular weight murein sacculi, with the concomitant formation of a 1,6-anhydromuramoyl product. Lytic transglycosylases (LTs) play an integral role in the metabolism of the peptidoglycan (PG) sacculus. Their lytic action creates space within the PG sacculus to allow for its expansion as well as for the insertion of various structures such as secretion systems and flagella. The sequence is that of Membrane-bound lytic murein transglycosylase F from Shigella sonnei (strain Ss046).